Reading from the N-terminus, the 162-residue chain is NADH-quinone oxidoreductase subunit I (162 aa).

2 consecutive 4Fe-4S ferredoxin-type domains span residues 53–83 (LRRY…IEAE) and 93–122 (TRYD…EGPN). Residues Cys63, Cys66, Cys69, Cys73, Cys102, Cys105, Cys108, and Cys112 each coordinate [4Fe-4S] cluster.

It belongs to the complex I 23 kDa subunit family. In terms of assembly, NDH-1 is composed of 14 different subunits. Subunits NuoA, H, J, K, L, M, N constitute the membrane sector of the complex. Requires [4Fe-4S] cluster as cofactor.

The protein localises to the cell inner membrane. It carries out the reaction a quinone + NADH + 5 H(+)(in) = a quinol + NAD(+) + 4 H(+)(out). In terms of biological role, NDH-1 shuttles electrons from NADH, via FMN and iron-sulfur (Fe-S) centers, to quinones in the respiratory chain. The immediate electron acceptor for the enzyme in this species is believed to be ubiquinone. Couples the redox reaction to proton translocation (for every two electrons transferred, four hydrogen ions are translocated across the cytoplasmic membrane), and thus conserves the redox energy in a proton gradient. The sequence is that of NADH-quinone oxidoreductase subunit I from Granulibacter bethesdensis (strain ATCC BAA-1260 / CGDNIH1).